Reading from the N-terminus, the 225-residue chain is Uracil-DNA glycosylase (225 aa).

Catalysis depends on aspartate 65, which acts as the Proton acceptor.

It belongs to the uracil-DNA glycosylase (UDG) superfamily. UNG family.

The protein resides in the cytoplasm. It catalyses the reaction Hydrolyzes single-stranded DNA or mismatched double-stranded DNA and polynucleotides, releasing free uracil.. Its function is as follows. Excises uracil residues from the DNA which can arise as a result of misincorporation of dUMP residues by DNA polymerase or due to deamination of cytosine. This chain is Uracil-DNA glycosylase, found in Clostridium perfringens (strain 13 / Type A).